A 258-amino-acid polypeptide reads, in one-letter code: Acyl-[acyl-carrier-protein]--UDP-N-acetylglucosamine O-acyltransferase (258 aa).

Belongs to the transferase hexapeptide repeat family. LpxA subfamily. Homotrimer.

The protein resides in the cytoplasm. The enzyme catalyses a (3R)-hydroxyacyl-[ACP] + UDP-N-acetyl-alpha-D-glucosamine = a UDP-3-O-[(3R)-3-hydroxyacyl]-N-acetyl-alpha-D-glucosamine + holo-[ACP]. It participates in glycolipid biosynthesis; lipid IV(A) biosynthesis; lipid IV(A) from (3R)-3-hydroxytetradecanoyl-[acyl-carrier-protein] and UDP-N-acetyl-alpha-D-glucosamine: step 1/6. Its function is as follows. Involved in the biosynthesis of lipid A, a phosphorylated glycolipid that anchors the lipopolysaccharide to the outer membrane of the cell. The polypeptide is Acyl-[acyl-carrier-protein]--UDP-N-acetylglucosamine O-acyltransferase (Pseudomonas entomophila (strain L48)).